A 586-amino-acid polypeptide reads, in one-letter code: Aspartate--tRNA(Asp/Asn) ligase (586 aa).

Position 176 (Glu176) interacts with L-aspartate. The interval 200 to 203 (QIFK) is aspartate. Arg222 is an L-aspartate binding site. Residues 222–224 (RDE) and Gln231 contribute to the ATP site. His449 serves as a coordination point for L-aspartate. Glu483 contacts ATP. Arg490 contacts L-aspartate. Position 535 to 538 (535 to 538 (GIDR)) interacts with ATP.

Belongs to the class-II aminoacyl-tRNA synthetase family. Type 1 subfamily. In terms of assembly, homodimer.

It is found in the cytoplasm. It catalyses the reaction tRNA(Asx) + L-aspartate + ATP = L-aspartyl-tRNA(Asx) + AMP + diphosphate. In terms of biological role, aspartyl-tRNA synthetase with relaxed tRNA specificity since it is able to aspartylate not only its cognate tRNA(Asp) but also tRNA(Asn). Reaction proceeds in two steps: L-aspartate is first activated by ATP to form Asp-AMP and then transferred to the acceptor end of tRNA(Asp/Asn). In Brachyspira hyodysenteriae (strain ATCC 49526 / WA1), this protein is Aspartate--tRNA(Asp/Asn) ligase.